The sequence spans 266 residues: uncharacterized protein (266 aa).

Residues 13–33 (IIGLMLIIFAGILFYAYILQH) form a helical membrane-spanning segment.

It belongs to the LicD transferase family.

It localises to the membrane. This is an uncharacterized protein from Rickettsia prowazekii (strain Madrid E).